The primary structure comprises 97 residues: Aspartyl/glutamyl-tRNA(Asn/Gln) amidotransferase subunit C (97 aa).

Residues 68 to 97 (ETGFTQEEALSNAPQQSQGQFRTPKVVESA) are disordered. Polar residues predominate over residues 70 to 88 (GFTQEEALSNAPQQSQGQF).

It belongs to the GatC family. In terms of assembly, heterotrimer of A, B and C subunits.

The enzyme catalyses L-glutamyl-tRNA(Gln) + L-glutamine + ATP + H2O = L-glutaminyl-tRNA(Gln) + L-glutamate + ADP + phosphate + H(+). The catalysed reaction is L-aspartyl-tRNA(Asn) + L-glutamine + ATP + H2O = L-asparaginyl-tRNA(Asn) + L-glutamate + ADP + phosphate + 2 H(+). Functionally, allows the formation of correctly charged Asn-tRNA(Asn) or Gln-tRNA(Gln) through the transamidation of misacylated Asp-tRNA(Asn) or Glu-tRNA(Gln) in organisms which lack either or both of asparaginyl-tRNA or glutaminyl-tRNA synthetases. The reaction takes place in the presence of glutamine and ATP through an activated phospho-Asp-tRNA(Asn) or phospho-Glu-tRNA(Gln). In Akkermansia muciniphila (strain ATCC BAA-835 / DSM 22959 / JCM 33894 / BCRC 81048 / CCUG 64013 / CIP 107961 / Muc), this protein is Aspartyl/glutamyl-tRNA(Asn/Gln) amidotransferase subunit C.